Reading from the N-terminus, the 513-residue chain is Protein indeterminate-domain 11 (513 aa).

Residues 1–84 form a disordered region; sequence MMNKDMLLHQ…QPGNPDPESE (84 aa). The span at 10–45 shows a compositional bias: polar residues; sequence QHQQPQQDENMSNLTSASGDQASVSSGNITEASGSN. Over residues 51-60 the composition is skewed to low complexity; that stretch reads QQQQEQQQQQ. Position 89 is a phosphoserine (Ser89). C2H2-type zinc fingers lie at residues 99 to 121 and 141 to 171; these read FVCEICNKGFQRDQNLQLHRRGH and YVCPEASCVHHDPSRALGDLTGIKKHFCRKH. The Nuclear localization signal motif lies at 163-170; sequence IKKHFCRK. Residues 176–199 form a C2H2-type 2; degenerate zinc finger; sequence WKCDKCSKKYAVQSDCKAHSKTCG. 8 residues coordinate Zn(2+): Cys178, Cys181, His194, Cys198, Cys205, Cys207, His220, and Cys224. The CCHC-type 2; atypical zinc finger occupies 203-226; that stretch reads YRCDCGTLFSRRDSFITHRAFCEA. Residues 213–225 form an SHR-binding region; the sequence is RRDSFITHRAFCE. Disordered stretches follow at residues 255–280 and 334–358; these read ASHPHHHHQTQPTINVSSSSSSSHNH and PQPHALTSSNPNPSNGGGGGGSLFS. The span at 264–280 shows a compositional bias: low complexity; it reads TQPTINVSSSSSSSHNH.

Its subcellular location is the nucleus. In terms of biological role, probable transcription factor. The protein is Protein indeterminate-domain 11 of Arabidopsis thaliana (Mouse-ear cress).